The chain runs to 332 residues: Holliday junction branch migration complex subunit RuvB (332 aa).

The large ATPase domain (RuvB-L) stretch occupies residues 1-181 (MTRFLDSDAM…FGITGHMEYY (181 aa)). ATP is bound by residues Leu20, Arg21, Gly62, Lys65, Thr66, Thr67, 128-130 (EDF), Arg171, Tyr181, and Arg218. Thr66 contacts Mg(2+). The tract at residues 182–252 (EENDLTEIIE…ITDKALTMLD (71 aa)) is small ATPAse domain (RuvB-S). Residues 255 to 332 (HEGLDYVDQK…EHLGYQRFDK (78 aa)) are head domain (RuvB-H). Positions 291, 310, 312, and 315 each coordinate DNA.

The protein belongs to the RuvB family. As to quaternary structure, homohexamer. Forms an RuvA(8)-RuvB(12)-Holliday junction (HJ) complex. HJ DNA is sandwiched between 2 RuvA tetramers; dsDNA enters through RuvA and exits via RuvB. An RuvB hexamer assembles on each DNA strand where it exits the tetramer. Each RuvB hexamer is contacted by two RuvA subunits (via domain III) on 2 adjacent RuvB subunits; this complex drives branch migration. In the full resolvosome a probable DNA-RuvA(4)-RuvB(12)-RuvC(2) complex forms which resolves the HJ.

It localises to the cytoplasm. The enzyme catalyses ATP + H2O = ADP + phosphate + H(+). In terms of biological role, the RuvA-RuvB-RuvC complex processes Holliday junction (HJ) DNA during genetic recombination and DNA repair, while the RuvA-RuvB complex plays an important role in the rescue of blocked DNA replication forks via replication fork reversal (RFR). RuvA specifically binds to HJ cruciform DNA, conferring on it an open structure. The RuvB hexamer acts as an ATP-dependent pump, pulling dsDNA into and through the RuvAB complex. RuvB forms 2 homohexamers on either side of HJ DNA bound by 1 or 2 RuvA tetramers; 4 subunits per hexamer contact DNA at a time. Coordinated motions by a converter formed by DNA-disengaged RuvB subunits stimulates ATP hydrolysis and nucleotide exchange. Immobilization of the converter enables RuvB to convert the ATP-contained energy into a lever motion, pulling 2 nucleotides of DNA out of the RuvA tetramer per ATP hydrolyzed, thus driving DNA branch migration. The RuvB motors rotate together with the DNA substrate, which together with the progressing nucleotide cycle form the mechanistic basis for DNA recombination by continuous HJ branch migration. Branch migration allows RuvC to scan DNA until it finds its consensus sequence, where it cleaves and resolves cruciform DNA. This is Holliday junction branch migration complex subunit RuvB from Streptococcus agalactiae serotype Ia (strain ATCC 27591 / A909 / CDC SS700).